We begin with the raw amino-acid sequence, 373 residues long: SWI/SNF-related matrix-associated actin-dependent regulator of chromatin subfamily B member 1-A (373 aa).

A DNA-binding region spans residues 1–101 (MALSKTYGQK…DEKYKAVSIS (101 aa)).

The protein belongs to the SNF5 family. In terms of assembly, component of the multiprotein chromatin-remodeling complexes SWI/SNF. Component of neural progenitors-specific chromatin remodeling complex (npBAF complex) and the neuron-specific chromatin remodeling complex (nBAF complex). Component of the BAF (SWI/SNF) chromatin remodeling complex. Component of the SWI/SNF-B (PBAF) chromatin remodeling complex. Binds to double-stranded DNA.

It localises to the nucleus. Its function is as follows. Involved in chromatin-remodeling. Core component of the BAF (SWI/SNF) complex. This ATP-dependent chromatin-remodeling complex plays important roles in cell proliferation and differentiation, in cellular antiviral activities and inhibition of tumor formation. Belongs to the neural progenitors-specific chromatin remodeling complex (npBAF complex) and the neuron-specific chromatin remodeling complex (nBAF complex) and may play a role in neural development. The protein is SWI/SNF-related matrix-associated actin-dependent regulator of chromatin subfamily B member 1-A (smarcb1a) of Danio rerio (Zebrafish).